Consider the following 531-residue polypeptide: Beta-hexosaminidase subunit beta (531 aa).

An N-terminal signal peptide occupies residues 1 to 24 (MRHRGLGLAALLALLAAVAPRSSA). Asn-50 carries N-linked (GlcNAc...) asparagine glycosylation. A disulfide bridge links Cys-65 with Cys-111. N-linked (GlcNAc...) asparagine glycosylation is found at Asn-116, Asn-164, and Asn-301. 2 disulfides stabilise this stretch: Cys-283–Cys-334 and Cys-508–Cys-525. Catalysis depends on Glu-329, which acts as the Proton donor.

The protein belongs to the glycosyl hydrolase 20 family. As to quaternary structure, there are 3 forms of beta-hexosaminidase: hexosaminidase A is a heterodimer composed of one subunit alpha and one subunit beta (chain A and B); hexosaminidase B is a homodimer of two beta subunits (two chains A and B); hexosaminidase S is a homodimer of two alpha subunits. The composition of the dimer (isozyme A versus isozyme S) has a significant effect on the substrate specificity of the alpha subunit active site.

The protein resides in the lysosome. Its subcellular location is the cytoplasmic vesicle. The protein localises to the secretory vesicle. It is found in the cortical granule. The catalysed reaction is Hydrolysis of terminal non-reducing N-acetyl-D-hexosamine residues in N-acetyl-beta-D-hexosaminides.. It carries out the reaction N-acetyl-beta-D-galactosaminyl-(1-&gt;4)-beta-D-3-sulfogalactosyl-(1-&gt;4)-beta-D-glucosyl-(1&lt;-&gt;1')-ceramide + H2O = a beta-D-3-sulfogalactosyl-(1-&gt;4)-beta-D-glucosyl-(1&lt;-&gt;1')-ceramide + N-acetyl-beta-D-galactosamine. It catalyses the reaction a ganglioside GM2 (d18:1(4E)) + H2O = a ganglioside GM3 (d18:1(4E)) + N-acetyl-beta-D-galactosamine. The enzyme catalyses a ganglioside GM2 + H2O = a ganglioside GM3 + N-acetyl-beta-D-galactosamine. The catalysed reaction is beta-D-GalNAc-(1-&gt;4)-alpha-L-IdoA-(1-&gt;3)-beta-D-GalNAc-4-sulfate-(1-&gt;4)-alpha-L-IdoA-(1-&gt;3)-D-GalNAc-4-sulfate + H2O = alpha-L-IdoA-(1-&gt;3)-beta-D-GalNAc-4-sulfate-(1-&gt;4)-alpha-L-IdoA-(1-&gt;3)-D-GalNAc-4-sulfate + N-acetyl-D-galactosamine. It carries out the reaction N-acetyl-beta-D-6-sulfogalactosaminyl-(1-&gt;4)-alpha-L-iduronyl-(1-&gt;3)-N-acetyl-D-6-sulfogalactosamine + H2O = alpha-L-iduronyl-(1-&gt;3)-N-acetyl-D-6-sulfogalactosamine + N-acetyl-D-6-sulfogalactosamine. Addition of GM2A stimulates the hydrolysis of sulfated glycosphingolipid SM2 and the ganglioside GM2. Functionally, hydrolyzes the non-reducing end N-acetyl-D-hexosamine and/or sulfated N-acetyl-D-hexosamine of glycoconjugates, such as the oligosaccharide moieties from proteins and neutral glycolipids, or from certain mucopolysaccharides. The isozyme B does not hydrolyze each of these substrates, however hydrolyzes efficiently neutral oligosaccharide. Only the isozyme A is responsible for the degradation of GM2 gangliosides in the presence of GM2A. During fertilization is responsible, at least in part, for the zona block to polyspermy. Present in the cortical granules of non-activated oocytes, is exocytosed during the cortical reaction in response to oocyte activation and inactivates the sperm galactosyltransferase-binding site, accounting for the block in sperm binding to the zona pellucida. This is Beta-hexosaminidase subunit beta from Felis catus (Cat).